The following is a 61-amino-acid chain: Conotoxin LiC32 (61 aa).

Residues M1 to A22 form the signal peptide. Residues H23–Q44 constitute a propeptide that is removed on maturation. Cysteine amide is present on C60.

This sequence belongs to the conotoxin T superfamily. Contains 2 disulfide bonds that can be either 'C1-C3, C2-C4' or 'C1-C4, C2-C3', since these disulfide connectivities have been observed for conotoxins with cysteine framework V (for examples, see AC P0DQQ7 and AC P81755). As to expression, expressed by the venom duct.

The protein resides in the secreted. In terms of biological role, has the ability to interact with the G-protein coupled somatostatin type 3 receptor (SSTR3). The ability was measured in competition binding experiments and the constant of inhibition (Ki) has been evaluated to be 3.5 uM. The sequence is that of Conotoxin LiC32 from Conus lividus (Livid cone).